We begin with the raw amino-acid sequence, 30 residues long: Trypsin inhibitor 4 (30 aa).

3 cysteine pairs are disulfide-bonded: Cys-3-Cys-20, Cys-10-Cys-22, and Cys-16-Cys-29.

This sequence belongs to the protease inhibitor I7 (squash-type serine protease inhibitor) family.

It localises to the secreted. Functionally, inhibits trypsin. The polypeptide is Trypsin inhibitor 4 (Cucumis sativus (Cucumber)).